A 346-amino-acid polypeptide reads, in one-letter code: LRP2-binding protein (346 aa).

The stretch at 58–91 (AMAYFLRGQLYFEEGWYEEALAQFEEIQEKDHQA) is one TPR repeat. 6 Sel1-like repeats span residues 92–124 (IYQL…DSSC), 132–167 (FAAA…DNGN), 172–205 (VKAQ…GNGS), 206–241 (LESQ…ERGN), 242–276 (VYAQ…EVHD), and 296–331 (AMAA…RLNP).

Interacts with LRP2.

It localises to the cytoplasm. Its function is as follows. May act as an adapter that regulates LRP2 function. The sequence is that of LRP2-binding protein (Lrp2bp) from Mus musculus (Mouse).